We begin with the raw amino-acid sequence, 278 residues long: MFKILRKERLAPGINLFEIESPRIAKHAKPGQFVMIRLHEKGERIPLTIADVDISKGSITIVAQEVGKTTRELGTYEAGDYILDVLGPLGKPSHIDYFGTVVMIGGGVGVAEIYPVAKAMKEKGNYVISILGFRTKDLVFWEDKLRSVSDEVIVTTNDGSYGMKGFTTHALQKLIEEGRKIDLVHAVGPAIMMKAVAELTKPYGIKTVASLNPIMVDGTGMCGACRVTVGGEVKFACVDGPEFDAHLVDWDQLMNRLAYYRDLEKISLEKWERERRMV.

Positions 1 to 4 (MFKI) are excised as a propeptide. Residues 1–95 (MFKILRKERL…LGPLGKPSHI (95 aa)) form the FAD-binding FR-type domain. [2Fe-2S] cluster contacts are provided by Cys-222, Cys-225, and Cys-237.

In terms of assembly, heterodimer of alpha and beta subunits. FAD serves as cofactor. [2Fe-2S] cluster is required as a cofactor.

The protein resides in the cytoplasm. The enzyme catalyses n sulfur + hydrogen sulfide + NADP(+) = (n+1) sulfur + NADPH. The catalysed reaction is 2 reduced [2Fe-2S]-[ferredoxin] + NADP(+) + H(+) = 2 oxidized [2Fe-2S]-[ferredoxin] + NADPH. A bifunctional enzyme that catalyzes the reduction of elemental sulfur or polysulfide to hydrogen sulfide with NADPH as electron donor. Also functions as a reduced ferredoxin:NADP oxidoreductase with a very high affinity for reduced ferredoxin. Exhibits a broad specificity for various physiological and non-physiological substrates with varied reduction potentials such as methyl viologen, benzyl viologen, FAD, FMN, methylene blue, 2,6-dichlorophenolindophenol (DCIP), cytochrome C and ferricyanide with highest preference for benzyl viologen. Does not reduce fumarate, succinate, nitrate, nitrite, sulfate, sulfite or protons. Does not possess any hydrogenase activity or NADPH-dependent glutamate synthase activity. The protein is Sulfide dehydrogenase subunit beta of Pyrococcus furiosus (strain ATCC 43587 / DSM 3638 / JCM 8422 / Vc1).